Reading from the N-terminus, the 149-residue chain is MSNLYKIGTETRNKIKKFRTSTARTDSIKALSIKIEPKPSYEIIVDEDEQEELDEIEDLSELAEILPDNSPRFVLTAYPTTTKDGFKQTPLVLVYWKPMTVVSQEWKMLYAGALEMIREECGTFKLIEVSSGLEDDSDVEELREQLENC.

At serine 2 the chain carries N-acetylserine. The region spanning asparagine 3–glutamate 147 is the ADF-H domain. Serine 137 bears the Phosphoserine mark.

The protein belongs to the actin-binding proteins ADF family. GMF subfamily.

The protein localises to the cytoplasm. It localises to the nucleus. Functionally, may be involved in mitochondrial organization and biogenesis. This chain is Protein AIM7 (AIM7), found in Saccharomyces cerevisiae (strain ATCC 204508 / S288c) (Baker's yeast).